Consider the following 538-residue polypeptide: Thermosome subunit beta (538 aa).

Residues serine 518–methionine 538 are disordered. Gly residues predominate over residues glutamate 528 to methionine 538.

This sequence belongs to the TCP-1 chaperonin family. Forms a Heterooligomeric complex of two stacked eight-membered rings.

Its function is as follows. Molecular chaperone; binds unfolded polypeptides in vitro, and has a weak ATPase activity. The polypeptide is Thermosome subunit beta (thsB) (Methanothermobacter thermautotrophicus (strain ATCC 29096 / DSM 1053 / JCM 10044 / NBRC 100330 / Delta H) (Methanobacterium thermoautotrophicum)).